A 200-amino-acid polypeptide reads, in one-letter code: Small ribosomal subunit protein uS4 (200 aa).

Residues 1–13 (MARYRGPKQKIAR) show a composition bias toward basic residues. The tract at residues 1 to 44 (MARYRGPKQKIARRFKEPIFGPSKALERKPYPPGQHGQSRRRRE) is disordered. Residues 92 to 154 (ARLDNTVFRM…SQDLEVIQTN (63 aa)) form the S4 RNA-binding domain.

It belongs to the universal ribosomal protein uS4 family. Part of the 30S ribosomal subunit. Contacts protein S5. The interaction surface between S4 and S5 is involved in control of translational fidelity.

Its function is as follows. One of the primary rRNA binding proteins, it binds directly to 16S rRNA where it nucleates assembly of the body of the 30S subunit. In terms of biological role, with S5 and S12 plays an important role in translational accuracy. The sequence is that of Small ribosomal subunit protein uS4 from Salinibacter ruber (strain DSM 13855 / M31).